Here is a 331-residue protein sequence, read N- to C-terminus: Heme A synthase (331 aa).

8 consecutive transmembrane segments (helical) span residues 6–26, 87–107, 124–144, 154–174, 193–213, 251–271, 279–299, and 301–321; these read VAIW…IGGF, YVHR…FIYF, ALLF…SGLV, LALH…QFFD, IWII…VAGL, VQFI…ILTI, LYVM…TLLL, and IPMA…GSGL. H255 lines the heme pocket. A heme-binding site is contributed by H309.

It belongs to the COX15/CtaA family. Type 2 subfamily. Interacts with CtaB. Requires heme b as cofactor.

The protein resides in the cell membrane. The enzyme catalyses Fe(II)-heme o + 2 A + H2O = Fe(II)-heme a + 2 AH2. The protein operates within porphyrin-containing compound metabolism; heme A biosynthesis; heme A from heme O: step 1/1. Functionally, catalyzes the conversion of heme O to heme A by two successive hydroxylations of the methyl group at C8. The first hydroxylation forms heme I, the second hydroxylation results in an unstable dihydroxymethyl group, which spontaneously dehydrates, resulting in the formyl group of heme A. The protein is Heme A synthase of Wolbachia pipientis subsp. Culex pipiens (strain wPip).